The following is a 229-amino-acid chain: UPF0173 metal-dependent hydrolase SSP1060 (229 aa).

The protein belongs to the UPF0173 family.

This Staphylococcus saprophyticus subsp. saprophyticus (strain ATCC 15305 / DSM 20229 / NCIMB 8711 / NCTC 7292 / S-41) protein is UPF0173 metal-dependent hydrolase SSP1060.